A 101-amino-acid chain; its full sequence is Small ribosomal subunit protein uS14 (101 aa).

This sequence belongs to the universal ribosomal protein uS14 family. In terms of assembly, part of the 30S ribosomal subunit. Contacts proteins S3 and S10.

Its function is as follows. Binds 16S rRNA, required for the assembly of 30S particles and may also be responsible for determining the conformation of the 16S rRNA at the A site. The chain is Small ribosomal subunit protein uS14 from Chlamydia trachomatis serovar L2 (strain ATCC VR-902B / DSM 19102 / 434/Bu).